Here is a 1966-residue protein sequence, read N- to C-terminus: Alpha-protein kinase 2 (1966 aa).

6 disordered regions span residues 23–65, 211–231, 1211–1259, 1303–1365, 1386–1423, and 1437–1463; these read NSSP…STGL, AMNSEQSPDQPFSIASNDTDK, LKSN…AYSD, SLPN…EGAG, KTQGKKKKKHVQHGTPKPENDAPTDVRSESRQKNVNGK, and NKPVAQPSGKTDITKKDSAQKVMSVRP. The segment covering 211–227 has biased composition (polar residues); it reads AMNSEQSPDQPFSIASN. Low complexity predominate over residues 1211–1221; it reads LKSNKKSSSSD. The segment covering 1325-1342 has biased composition (basic and acidic residues); sequence SDGKMRSKHKEKPDDKQQ. Residues 1388 to 1397 are compositionally biased toward basic residues; that stretch reads QGKKKKKHVQ. Over residues 1401-1417 the composition is skewed to basic and acidic residues; that stretch reads PKPENDAPTDVRSESRQ. Positions 1577–1659 constitute an Ig-like domain; that stretch reads PRVVSEIQAD…SLIVANISVS (83 aa). A disulfide bond links Cys1599 and Cys1649. The region spanning 1702–1934 is the Alpha-type protein kinase domain; the sequence is KEDFLSDQYF…YCELLGLVSL (233 aa). The disordered stretch occupies residues 1937-1966; sequence KPKRTVAPPKPKTQPVPKKKTFGPVLNAKS.

The protein belongs to the protein kinase superfamily. Alpha-type protein kinase family. ALPK subfamily. In terms of tissue distribution, expressed in developing cardiac tissue.

The protein resides in the basolateral cell membrane. It catalyses the reaction L-seryl-[protein] + ATP = O-phospho-L-seryl-[protein] + ADP + H(+). The catalysed reaction is L-threonyl-[protein] + ATP = O-phospho-L-threonyl-[protein] + ADP + H(+). Its function is as follows. Protein kinase that recognizes phosphorylation sites in which the surrounding peptides have an alpha-helical conformation. Regulates cardiac development and cardiomyocyte differentiation by negatively regulating Wnt/beta-catenin signaling. The chain is Alpha-protein kinase 2 (alpk2) from Danio rerio (Zebrafish).